Reading from the N-terminus, the 431-residue chain is Saglin (431 aa).

Positions 1–39 are cleaved as a signal peptide; it reads MSVRGYSGVQVISSRKHRSMSRLPTVLLLLASAAVLAAG. The N-linked (GlcNAc...) asparagine glycan is linked to Asn95. Residues 120–169 are a coiled coil; the sequence is LDDAQRQMEQEHRQYAATLEEQLHAAQQETQQEQEMKKALQKQLDALTDS.

As to quaternary structure, homodimer; disulfide-linked. (Microbial infection) Interacts with Plasmodium berghei TRAP (via integrin-like A-domain); the interaction probably promotes sporozoite invasion of salivary gland. As to expression, female saliva (at protein level). Female salivary gland (at protein level).

The protein resides in the secreted. In terms of biological role, (Microbial infection) Facilitates invasion of mosquito salivary glands by Plasmodium yoelii sporozoites. Its function is as follows. (Microbial infection) Facilitates invasion of mosquito salivary glands by Plasmodium falciparum sporozoites. (Microbial infection) Probably facilitates invasion of mosquito salivary glands by Plasmodium berghei sporozoites. The polypeptide is Saglin (Anopheles gambiae (African malaria mosquito)).